The sequence spans 580 residues: 9,13-epoxylabda-14-ene synthase, chloroplastic (580 aa).

The transit peptide at 1 to 32 (MSITFNLKIAPFSGPGIQRSKETFPATEIQIT) directs the protein to the chloroplast. Mg(2+) is bound by residues D322, D326, N466, T470, and E474. The DDXXD motif signature appears at 322-326 (DDFFD).

Belongs to the terpene synthase family. Mg(2+) is required as a cofactor. Present in both leaves and flowers, with higher levels in leaves.

The protein resides in the plastid. It localises to the chloroplast. It catalyses the reaction peregrinol diphosphate = (13R)-9,13-epoxylabd-14-ene + diphosphate. It carries out the reaction (+)-copalyl diphosphate = miltiradiene + diphosphate. The catalysed reaction is 8-hydroxycopalyl diphosphate = (13R)-manoyl oxide + diphosphate. It participates in secondary metabolite biosynthesis; terpenoid biosynthesis. Its function is as follows. Involved in the biosynthesis of labdane-type diterpenoid including marrubiin and other labdane-related furanoid diterpenoids with potential applications as anti-diabetics, analgesics or vasorelaxants. Terpene synthase the catalyzes the conversion of peregrinol diphosphate to 9,13(R)-epoxy-labd-14-ene, from (+)-copalyl diphosphate ((+)-CPP) to miltiradiene and from 8-hydroxycopalyl diphosphate (LPP, labda-13-en-8-ol diphosphate) to manoyl oxide. The sequence is that of 9,13-epoxylabda-14-ene synthase, chloroplastic from Marrubium vulgare (White horehound).